A 133-amino-acid chain; its full sequence is Gamma-crystallin 1 (133 aa).

Positions W1 to P41 constitute a Beta/gamma crystallin 'Greek key' 2 domain. The segment at Q42–S46 is connecting peptide. Beta/gamma crystallin 'Greek key' domains follow at residues F47 to E87 and G88 to Q130.

It belongs to the beta/gamma-crystallin family. Monomer.

Functionally, crystallins are the dominant structural components of the vertebrate eye lens. This chain is Gamma-crystallin 1, found in Rana temporaria (European common frog).